We begin with the raw amino-acid sequence, 364 residues long: MIRAFDQLSLPLLRWLDAEDAHRLAIQGLKLLPAIKPRPDDAKLAVRAFGLNFPNPVGMAAGFDKNAEVPDALLRLGFGFVEIGSVTPRPQSGNPRPRLFRLERDEAVVNRMGFNNDGAEIVLRRLAGRANQGGIVGVNVGANKDSADRVADYVRLIETFAPVASYFTVNISSPNTPGLRNLQQAAQLNELLSKVLEARDRVRRKAGDTPVLLKIAPDLSLAELDDVVHVARSRGVDGMIVSNTTLARPNSLREQLRAKEQGGLSGRPLFRLSTRMVAETFVRVEGAFPLIGVGGIDSGGAALTKIRAGASLIQLYSSLVYKGLGLVESIKADLTSTLLRTGRDSLSEIVGADAATITAEDWPV.

FMN-binding positions include 61–65 and Ser85; that span reads AGFDK. Lys65 contacts substrate. A substrate-binding site is contributed by 110 to 114; sequence NRMGF. FMN contacts are provided by Asn139 and Asn170. Asn170 is a binding site for substrate. Ser173 serves as the catalytic Nucleophile. Asn175 contacts substrate. Positions 214 and 242 each coordinate FMN. 243-244 is a substrate binding site; sequence NT. Residues Gly266, Gly295, and 316–317 contribute to the FMN site; that span reads YS.

This sequence belongs to the dihydroorotate dehydrogenase family. Type 2 subfamily. In terms of assembly, monomer. It depends on FMN as a cofactor.

It is found in the cell membrane. It catalyses the reaction (S)-dihydroorotate + a quinone = orotate + a quinol. The protein operates within pyrimidine metabolism; UMP biosynthesis via de novo pathway; orotate from (S)-dihydroorotate (quinone route): step 1/1. In terms of biological role, catalyzes the conversion of dihydroorotate to orotate with quinone as electron acceptor. The sequence is that of Dihydroorotate dehydrogenase (quinone) from Bradyrhizobium sp. (strain BTAi1 / ATCC BAA-1182).